We begin with the raw amino-acid sequence, 416 residues long: Keratin, type I cuticular Ha1 (416 aa).

The segment at 2–56 (PYNCCLPALSCRTSCSSRPCVPPSCHGCTLPGACNIPANVGNCNWFCEGSFNGNE) is head. The region spanning 56–367 (EKETMQFLND…GLLESEDCKL (312 aa)) is the IF rod domain. The segment at 57 to 91 (KETMQFLNDRLASYMEKVRQLERENAELECRIQER) is coil 1A. The linker 1 stretch occupies residues 92-102 (NQQQDPLVCPA). Residues 103 to 203 (YQAYFRTIEE…HEEEVNTLRC (101 aa)) are coil 1B. The linker 12 stretch occupies residues 204 to 219 (QLGDRLNVEVDAAPTV). The coil 2 stretch occupies residues 220 to 363 (DLNRVLNETR…NTYRGLLESE (144 aa)). The interval 364–416 (DCKLPCNPCATSNACGKPIGPCVSNPCVPCPPPAPCTPCVPRPRCGPCNSFVR) is tail.

The protein belongs to the intermediate filament family.

The sequence is that of Keratin, type I cuticular Ha1 (Krt31) from Mus musculus (Mouse).